A 423-amino-acid chain; its full sequence is NADP-specific glutamate dehydrogenase (423 aa).

Residue Lys-112 is part of the active site.

This sequence belongs to the Glu/Leu/Phe/Val dehydrogenases family. In terms of assembly, homohexamer.

It catalyses the reaction L-glutamate + NADP(+) + H2O = 2-oxoglutarate + NH4(+) + NADPH + H(+). The protein is NADP-specific glutamate dehydrogenase (gdhA) of Saccharolobus shibatae (strain ATCC 51178 / DSM 5389 / JCM 8931 / NBRC 15437 / B12) (Sulfolobus shibatae).